The chain runs to 113 residues: Large ribosomal subunit protein uL22 (113 aa).

Belongs to the universal ribosomal protein uL22 family. Part of the 50S ribosomal subunit.

Its function is as follows. This protein binds specifically to 23S rRNA; its binding is stimulated by other ribosomal proteins, e.g. L4, L17, and L20. It is important during the early stages of 50S assembly. It makes multiple contacts with different domains of the 23S rRNA in the assembled 50S subunit and ribosome. Functionally, the globular domain of the protein is located near the polypeptide exit tunnel on the outside of the subunit, while an extended beta-hairpin is found that lines the wall of the exit tunnel in the center of the 70S ribosome. The polypeptide is Large ribosomal subunit protein uL22 (Carboxydothermus hydrogenoformans (strain ATCC BAA-161 / DSM 6008 / Z-2901)).